A 193-amino-acid chain; its full sequence is ATP-dependent Clp protease proteolytic subunit (193 aa).

The active-site Nucleophile is the serine 98. Histidine 123 is an active-site residue.

This sequence belongs to the peptidase S14 family. As to quaternary structure, fourteen ClpP subunits assemble into 2 heptameric rings which stack back to back to give a disk-like structure with a central cavity, resembling the structure of eukaryotic proteasomes.

Its subcellular location is the cytoplasm. The catalysed reaction is Hydrolysis of proteins to small peptides in the presence of ATP and magnesium. alpha-casein is the usual test substrate. In the absence of ATP, only oligopeptides shorter than five residues are hydrolyzed (such as succinyl-Leu-Tyr-|-NHMec, and Leu-Tyr-Leu-|-Tyr-Trp, in which cleavage of the -Tyr-|-Leu- and -Tyr-|-Trp bonds also occurs).. Functionally, cleaves peptides in various proteins in a process that requires ATP hydrolysis. Has a chymotrypsin-like activity. Plays a major role in the degradation of misfolded proteins. This Haemophilus influenzae (strain 86-028NP) protein is ATP-dependent Clp protease proteolytic subunit.